The sequence spans 604 residues: MPKHYRPAGKKKEGNAAKYITRTKAVKYLQISLATFRKLCILKGVFPRDPKKKVEGNHKTYYHMKDIAFLAHDPLIEKFREIKVHRKKVKKAFAKKNKDLADRLLNRPPTYKLDRLILERYPTFVDALRDLDDCLTMVHLFAALPAVEGERVQVQRIHNCRRLSHEWQAYISRTHSLRKTFISVKGIYYQAEVQGQKITWLTPHALQQVLTDDVDFNVMLTFLEFYETLLGFINFKLYHSINVNYPPVLDPRLEALASELYALCRYMSSGRVPGNSEPAGLIEDKEGEDNKESSKTDESELRLAQLQHQLPTNEPGALMHLVQESTAADADDADAKECRSLFKNLKFYLSREVPRESLLFIIPAFGGTVSWEGEGAPFDETDEDITHQIVDRPTQSHVFLSREYVQPQWIYDCVNARIILPTEGYIVGRVPPPHLSPFVDNDAEGYIPEYAETIKRLQAAAQSQVLPLPSLGDEDMENSLVEAIIDRSESNEIADKKRKLEMLEKQYHDELRMEYEGKTFSNRTADNQPDVVDKSDTKEADDHMEDSHKQAEKDAADISKTLMSRKQRGLLQAIEINQERKKDKVNLLKKRKKNADSSASAKGR.

Residues 275 to 299 (NSEPAGLIEDKEGEDNKESSKTDES) form a disordered region. Over residues 282–299 (IEDKEGEDNKESSKTDES) the composition is skewed to basic and acidic residues. One can recognise a BRCT domain in the interval 337 to 427 (ECRSLFKNLK…IILPTEGYIV (91 aa)). Disordered stretches follow at residues 518–557 (KTFS…DAAD) and 574–604 (IEIN…AKGR). Basic and acidic residues-rich tracts occupy residues 531–557 (VVDK…DAAD) and 577–586 (NQERKKDKVN).

It belongs to the pescadillo family.

The protein localises to the nucleus. The protein resides in the nucleolus. It localises to the nucleoplasm. Functionally, required for maturation of ribosomal RNAs and formation of the large ribosomal subunit. The sequence is that of Pescadillo homolog (PES) from Oryza sativa subsp. japonica (Rice).